The chain runs to 827 residues: Rho GTPase-activating protein 6 (827 aa).

The PH domain maps to 18 to 125 (TVYKSGPLFI…WKAALEQALA (108 aa)). The 200-residue stretch at 172-371 (LALEEIDGSP…ALLEDYGNMI (200 aa)) folds into the Rho-GAP domain. 2 disordered regions span residues 379–437 (CSTS…SDYA) and 517–561 (YTTS…SSGN). A compositionally biased stretch (basic and acidic residues) spans 401 to 412 (IVVKHPDLHTLD). Over residues 413–423 (IEEGETDDDND) the composition is skewed to acidic residues. Residues 517–543 (YTTSAEKPASKTTGSSTVNSKRSSSWG) show a composition bias toward polar residues. Residues 560-684 (GNDELLIQRL…HQLSQQRQHH (125 aa)) are a coiled coil.

Acts as a GTPase activator for the Rac-type GTPase by converting it to an inactive GDP-bound state. This Arabidopsis thaliana (Mouse-ear cress) protein is Rho GTPase-activating protein 6 (ROPGAP6).